Reading from the N-terminus, the 142-residue chain is Large ribosomal subunit protein uL13 (142 aa).

It belongs to the universal ribosomal protein uL13 family. Part of the 50S ribosomal subunit.

In terms of biological role, this protein is one of the early assembly proteins of the 50S ribosomal subunit, although it is not seen to bind rRNA by itself. It is important during the early stages of 50S assembly. This is Large ribosomal subunit protein uL13 from Pasteurella multocida (strain Pm70).